An 83-amino-acid polypeptide reads, in one-letter code: Putative snRNP Sm-like protein (83 aa).

In terms of domain architecture, Sm spans 9 to 81 (KPMDVLKNAL…VIFVSPSKGD (73 aa)).

This sequence belongs to the snRNP Sm proteins family.

The chain is Putative snRNP Sm-like protein from Thermoplasma volcanium (strain ATCC 51530 / DSM 4299 / JCM 9571 / NBRC 15438 / GSS1).